A 308-amino-acid chain; its full sequence is Adipolin (308 aa).

The signal sequence occupies residues 1-21 (MWAWGWAAAALLWLQTAGAGA). Residues 36–119 (DSPNITTSNR…PPGSPGVGVT (84 aa)) are disordered. Asn39 is a glycosylation site (N-linked (GlcNAc...) asparagine). Residues 82–93 (RKRCRGRDKKSR) are compositionally biased toward basic residues. Residues 99-113 (PGPPGPPGPPGPPGS) are compositionally biased toward pro residues. Residues 153 to 308 (QRLVVEAFYC…SSFSGMLLGT (156 aa)) form the C1q domain.

This sequence belongs to the adipolin/erythroferrone family. As to quaternary structure, homomultimer; disulfide-linked. Adipolin fC1QTNF12: homotrimer; disulfide-linked. Adipolin gC1QTNF12: homodimer; disulfide-linked. May interact with ERFE. Processed into Adipolin fC1QTNF12 and Adipolin gC1QTNF12 by FURIN. Insulin enhances endogenous C1QTNF12 cleavage. Widely expressed, with high expression in subcutaneous and epididymal white adipose tissues and brown adipose tissue. Expressed in adipocytes (at protein level).

The protein resides in the secreted. Its function is as follows. Insulin-sensitizing adipocyte-secreted protein (adipokine) that regulates glucose metabolism in liver and adipose tissue. Promotes glucose uptake in adipocytes and suppresses de novo glucose production in hepatocytes via the PI3K-Akt signaling pathway. Administration lead to reduction of blood glucose. Able to attenuate inflammation in fat tissue. Acts by activating the Akt signaling in hepatocytes and adipocytes. Not able to increase insulin-stimulated glucose uptake in adipocytes. In terms of biological role, acts by activating the MAP kinase. Increases insulin-stimulated glucose uptake in adipocytes. The chain is Adipolin (C1qtnf12) from Mus musculus (Mouse).